Consider the following 207-residue polypeptide: Large ribosomal subunit protein uL4 (207 aa).

Belongs to the universal ribosomal protein uL4 family. As to quaternary structure, part of the 50S ribosomal subunit.

Its function is as follows. One of the primary rRNA binding proteins, this protein initially binds near the 5'-end of the 23S rRNA. It is important during the early stages of 50S assembly. It makes multiple contacts with different domains of the 23S rRNA in the assembled 50S subunit and ribosome. In terms of biological role, forms part of the polypeptide exit tunnel. The protein is Large ribosomal subunit protein uL4 of Geobacter metallireducens (strain ATCC 53774 / DSM 7210 / GS-15).